We begin with the raw amino-acid sequence, 543 residues long: Zinc finger protein egl-43 (543 aa).

Residues 2–62 (SIDTDFLTSV…NLIKEADDGE (61 aa)) are positive regulatory (PR) domain. 2 consecutive C2H2-type zinc fingers follow at residues 159-181 (HKCG…SHIH) and 187-209 (FRCH…RRVH). A C2H2-type 3; atypical zinc finger spans residues 213-233 (WTCPTCQSQMPSQAALTKHRP). Residues 299 to 380 (PDAECSSGHA…TSTKKRPTSH (82 aa)) are disordered. Over residues 306–317 (GHASESSPTTTE) the composition is skewed to polar residues. A compositionally biased stretch (basic and acidic residues) spans 335-348 (TTSKSDDGEDRDSI). 2 C2H2-type zinc fingers span residues 444–466 (YTCK…LRTH) and 472–495 (YKCQ…RNIH). Residues 496 to 543 (NKPNTSLTPHNHHRQRSLHNSTSTSTTTTTVHHPLLHLPGTSVPVPKV) are disordered. A compositionally biased stretch (low complexity) spans 513 to 533 (LHNSTSTSTTTTTVHHPLLHL).

The protein localises to the nucleus. Functionally, probable transcription factor, required for migration of the hermaphrodite-specific motor neurons (HSNs) from the tail to the gonad primordium during HSN cell differentiation. Required for phasmid neuron development. Required to specify the pi-cell fate of ventral uterine precursor cell (VU) cells. Its function is as follows. Probable transcription factor, involved in lin-12 (Notch)-dependent anchor cell (AC) and ventral uterine (VU) precursor cell fate specification and in AC invasion. Prevents AC proliferation after AC cell specification by repressing lin-12 expression. May form a positive feedback loop, together with the transcription factor fos-1, that maintains mutual high levels of expression and so activates AC invasion. Dispensable for anchor cell (AC) invasion and for preventing AC proliferation. This is Zinc finger protein egl-43 from Caenorhabditis elegans.